A 375-amino-acid polypeptide reads, in one-letter code: Queuine tRNA-ribosyltransferase (375 aa).

Aspartate 89 (proton acceptor) is an active-site residue. Residues 89-93 (DSGGF), aspartate 143, glutamine 185, and glycine 212 each bind substrate. Residues 243–249 (GVGKPED) form an RNA binding region. Aspartate 262 serves as the catalytic Nucleophile. The RNA binding; important for wobble base 34 recognition stretch occupies residues 267–271 (TRNAR). The Zn(2+) site is built by cysteine 300, cysteine 302, cysteine 305, and histidine 331.

This sequence belongs to the queuine tRNA-ribosyltransferase family. As to quaternary structure, homodimer. Within each dimer, one monomer is responsible for RNA recognition and catalysis, while the other monomer binds to the replacement base PreQ1. Zn(2+) is required as a cofactor.

The enzyme catalyses 7-aminomethyl-7-carbaguanine + guanosine(34) in tRNA = 7-aminomethyl-7-carbaguanosine(34) in tRNA + guanine. The protein operates within tRNA modification; tRNA-queuosine biosynthesis. Functionally, catalyzes the base-exchange of a guanine (G) residue with the queuine precursor 7-aminomethyl-7-deazaguanine (PreQ1) at position 34 (anticodon wobble position) in tRNAs with GU(N) anticodons (tRNA-Asp, -Asn, -His and -Tyr). Catalysis occurs through a double-displacement mechanism. The nucleophile active site attacks the C1' of nucleotide 34 to detach the guanine base from the RNA, forming a covalent enzyme-RNA intermediate. The proton acceptor active site deprotonates the incoming PreQ1, allowing a nucleophilic attack on the C1' of the ribose to form the product. After dissociation, two additional enzymatic reactions on the tRNA convert PreQ1 to queuine (Q), resulting in the hypermodified nucleoside queuosine (7-(((4,5-cis-dihydroxy-2-cyclopenten-1-yl)amino)methyl)-7-deazaguanosine). The chain is Queuine tRNA-ribosyltransferase from Pseudoalteromonas translucida (strain TAC 125).